A 570-amino-acid polypeptide reads, in one-letter code: MGMWWIVAVAILAHTASAAVREYAWEVEYKFGWPDCKEGMVMAVNGQFPGPTIHALAGDTIVVHLTNKLATEGLVIHWHGIRQLGSPWADGAAGVTQCAISPGETFTYNFTVDKPGTHFYHGHYGMQRSAGLYGSLIIDVAKGKKEPLRYDGEFNLLLSDWWHEDVLSQEIGLSSRPMRWIGEAQSILINGRGQFNCSLAAQFSSTSLPTCTFKEGDQCAPQRLHVEPNKTYRIRLASSTALASLNFAVQGHKLVVVEADGNYITPFTTDDIDIYSGETYSVLLTTDQDPSQNYYITAGVRGRKPNTPPALTVLNYVTAPSSQLPTSPPPETPRWNDFDRSKNFSKKIFAAMGSPSPPETFDERLILLNTQNLIEGFTKWAINNVSLAVPGTPYLGSVKYNLRTGFNRSSPPKDYPVDYDIMTPPRNRNAKQGNVSCVFPFNVTVDVILQNANGLNANASEIHPWHLHGHDFWVLGYGEGKFKPGVDEKTYNLKNPPLRNTVALYPYGWTALRFVTDNPGVWFFHCHIEPHLHMGMGVVFAEGLNRIGKVPDEALGCGLTKQFLMNRNNP.

Positions 1 to 18 (MGMWWIVAVAILAHTASA) are cleaved as a signal peptide. Plastocyanin-like domains are found at residues 33–140 (WPDC…IIDV) and 154–317 (FNLL…LNYV). 3 disulfide bridges follow: Cys36–Cys219, Cys98–Cys557, and Cys197–Cys211. The Cu cation site is built by His77 and His79. A glycan (N-linked (GlcNAc...) asparagine) is linked at Asn109. 2 residues coordinate Cu cation: His121 and His123. Asn196 carries N-linked (GlcNAc...) asparagine glycosylation. 7 N-linked (GlcNAc...) asparagine glycosylation sites follow: Asn229, Asn343, Asn384, Asn407, Asn434, Asn442, and Asn458. Positions 426–543 (RNRNAKQGNV…MGMGVVFAEG (118 aa)) constitute a Plastocyanin-like 3 domain. Cu cation-binding residues include His463, His466, His468, His525, Cys526, His527, His531, and Met536.

It belongs to the multicopper oxidase family. In terms of assembly, dimer. It depends on Cu cation as a cofactor.

The protein localises to the secreted. The enzyme catalyses 4 L-ascorbate + O2 = 4 monodehydro-L-ascorbate radical + 2 H2O. Its pathway is cofactor degradation; L-ascorbate degradation. Its function is as follows. Ascorbate oxidase involved in a redox system involving ascorbic acid (AsA). The oxidation of AsA represses responses to high salinity and oxidative stress conditions such as vegetative growth and seed production reductions. Negative regulator of defense responses toward incompatible Turnip mosaic virus (TuMV strain UK1) by preventing jasmonic acid (JA)- dependent accumulation of ascorbic acid (AsA, AS) and dehydroascobic acid (DHA). The protein is L-ascorbate oxidase of Brassica rapa subsp. pekinensis (Chinese cabbage).